We begin with the raw amino-acid sequence, 533 residues long: RNA end formation protein 2 (533 aa).

Disordered regions lie at residues 187–254, 260–279, and 321–344; these read SNST…SSMK, LFNKNEAKSTESLPTSSKKK, and SSSTSGSSTTTVATPASSEEPLKK. Residues 206–222 show a composition bias toward basic and acidic residues; sequence KIKDSEKEKEKEKDKSK. Low complexity predominate over residues 242 to 252; that stretch reads SSPSPTASTSS. The span at 321-338 shows a compositional bias: low complexity; it reads SSSTSGSSTTTVATPASS.

In terms of assembly, interacts with FIR1. Component of the cleavage and polyadenylation factor (CPF) complex, which is composed of PTI1, SYC1, SSU72, GLC7, MPE1, REF2, PFS2, PTA1, YSH1/BRR5, SWD2, CFT2/YDH1, YTH1, CFT1/YHH1, FIP1 and PAP1. Component of the APT complex, which is a subcomplex of CPF, and is composed of PTI1, SYC1, SSU72, GLC7, REF2, PTA1 and SWD2.

The protein resides in the nucleus. Its function is as follows. RNA-binding component of the cleavage and polyadenylation factor (CPF) complex, which plays a key role in polyadenylation-dependent pre-mRNA 3'-end formation and cooperates with cleavage factors including the CFIA complex and NAB4/CFIB. Negative regulator of poly(A) synthesis. Component of the APT complex, which may be involved in polyadenylation-independent transcript 3'-end formation. REF2 is required for 3'-end formation of snoRNAs. This is RNA end formation protein 2 (REF2) from Saccharomyces cerevisiae (strain ATCC 204508 / S288c) (Baker's yeast).